Here is a 191-residue protein sequence, read N- to C-terminus: Adenine phosphoribosyltransferase (191 aa).

The protein belongs to the purine/pyrimidine phosphoribosyltransferase family. Homodimer.

Its subcellular location is the cytoplasm. It catalyses the reaction AMP + diphosphate = 5-phospho-alpha-D-ribose 1-diphosphate + adenine. It participates in purine metabolism; AMP biosynthesis via salvage pathway; AMP from adenine: step 1/1. Functionally, catalyzes a salvage reaction resulting in the formation of AMP, that is energically less costly than de novo synthesis. The chain is Adenine phosphoribosyltransferase from Bordetella bronchiseptica (strain ATCC BAA-588 / NCTC 13252 / RB50) (Alcaligenes bronchisepticus).